We begin with the raw amino-acid sequence, 3411 residues long: Genome polyprotein (3411 aa).

Topologically, residues 1–104 (MSGRKAQGKT…LSSRKRRSHD (104 aa)) are cytoplasmic. A propeptide spans 102 to 121 (SHDALAVQFLILGMLLMAGG) (ER anchor for the capsid protein C, removed in mature form by serine protease NS3). The chain crosses the membrane as a helical span at residues 105–125 (ALAVQFLILGMLLMAGGVTLV). Over 126 to 244 (RKNRWLLLNV…GERQLQKIER (119 aa)) the chain is Extracellular. Asn-134 and Asn-150 each carry an N-linked (GlcNAc...) asparagine; by host glycan. Residues 245-265 (WLVRNPFFAVTALTIAYLVGS) traverse the membrane as a helical segment. The Cytoplasmic segment spans residues 266–270 (NMTQR). Residues 271-285 (VVIALLVLAVGPAYS) form a helical membrane-spanning segment. The Extracellular segment spans residues 286 to 730 (AHCIGITDRD…TVFGSAFQGL (445 aa)). 8 cysteine pairs are disulfide-bonded: Cys-288-Cys-315, Cys-345-Cys-401, Cys-345-Cys-406, Cys-359-Cys-390, Cys-377-Cys-401, Cys-377-Cys-406, Cys-467-Cys-568, and Cys-585-Cys-615. The tract at residues 383–396 (DRGWGNGCGLFGKG) is fusion peptide. The chain crosses the membrane as a helical span at residues 731–751 (FGGLSWITKVIMGAVLIWVGI). The Extracellular portion of the chain corresponds to 752–757 (NTRNMT). A helical membrane pass occupies residues 758 to 778 (MSMSMILVGVIMMFLSLGVGA). Topologically, residues 779 to 1132 (DQGCAINFGK…LVRSWVTAGE (354 aa)) are extracellular. Disulfide bonds link Cys-782/Cys-793, Cys-833/Cys-921, Cys-957/Cys-1002, Cys-1058/Cys-1107, Cys-1069/Cys-1091, and Cys-1090/Cys-1094. Residues Asn-908 and Asn-986 are each glycosylated (N-linked (GlcNAc...) asparagine; by host). A helical transmembrane segment spans residues 1133–1153 (IHAVPFGLVSMMIAMEVVLRK). Over 1154–1201 (RQGPKQMLVGGVVLLGAMLVGQVTLLDLLKLTVAVGLHFHEMNNGGDA) the chain is Cytoplasmic. Residues 1202 to 1222 (MYMALIAAFSIRPGLLIGFGL) form a helical membrane-spanning segment. The Lumenal portion of the chain corresponds to 1223–1287 (RTLWSPRERL…ILPLMALLTP (65 aa)). A helical transmembrane segment spans residues 1288-1308 (VTMAEVRLAAMLFCTVVIIGV). Topologically, residues 1309 to 1355 (LHQNSKDTSMQKTIPLVALTLTSYLGLTQPFLGLCAFLATRLFGRRS) are cytoplasmic. A helical membrane pass occupies residues 1356–1376 (IPVNEALAAAGLVGVLAGLAF). Residues 1377-1378 (QE) lie on the Lumenal side of the membrane. Residues 1379 to 1399 (MENFLGPIAVGGILMMLVSVA) traverse the membrane as a helical segment. Residues 1400 to 1456 (GRVDGLELRKLGEVSWEEEAEISGSSARYDVALSEQGEFKLLSEEKVPWDQVVMTSL) are Cytoplasmic-facing. Positions 1407 to 1446 (LRKLGEVSWEEEAEISGSSARYDVALSEQGEFKLLSEEKV) are interacts with and activates NS3 protease. The segment at residues 1457 to 1477 (ALVGAAIHPFALLLVLAGWLF) is an intramembrane region (helical). The Cytoplasmic portion of the chain corresponds to 1478–2157 (HVKGARRSGD…RNALSMMPEA (680 aa)). The region spanning 1485-1665 (SGDVLWDIPT…EVKEEGKEEL (181 aa)) is the Peptidase S7 domain. Active-site charge relay system; for serine protease NS3 activity residues include His-1537, Asp-1561, and Ser-1622. In terms of domain architecture, Helicase ATP-binding spans 1669 to 1825 (PTMLKKGMTT…HSNGEIEDVQ (157 aa)). Residues 1673 to 1676 (KKGM) are important for RNA-binding. 1682–1689 (FHPGAGKT) is an ATP binding site. A DEAH box motif is present at residues 1773–1776 (DEAH). Residues 1820–1997 (EIEDVQTDIP…VRGGMVAPLY (178 aa)) enclose the Helicase C-terminal domain. N6-acetyllysine; by host is present on Lys-1877. The segment at 1942–1961 (AAQRRGRIGRNPNRDGDSYY) is disordered. A helical transmembrane segment spans residues 2158-2178 (MTIAMLFILAGLLTSGMVIFF). Topologically, residues 2179–2186 (MSPKGISR) are lumenal. An intramembrane region (helical) is located at residues 2187 to 2207 (MSMAMGTMAGCGYLMFLGGVK). The Lumenal portion of the chain corresponds to 2208–2209 (PT). A helical membrane pass occupies residues 2210-2230 (HISYIMLIFFVLMVVVIPEPG). Residues 2231–2241 (QQRSIQDNQVA) are Cytoplasmic-facing. Residues 2242-2262 (YLIIGILTLVSVVAANELGML) form a helical membrane-spanning segment. At 2263-2293 (EKTKEDLFGKKDLIPSSASPWSWPDLDLKPG) the chain is on the lumenal side. The segment at residues 2294–2314 (AAWTVYVGIVTMLSPMLHHWI) is an intramembrane region (helical). Topologically, residues 2315–2360 (KVEYGNLSLSGIAQSASVLSFMDKGIPFMKMNISVIILLVSGWNSI) are lumenal. A helical transmembrane segment spans residues 2361-2380 (TVMPLLCGIGCAMLHWSLIL). Residues 2381 to 2421 (PGIKAQQSKLAQRRVFHGVAKNPVVDGNPTVDIEEAPEMPA) are Cytoplasmic-facing. Residues 2422 to 2442 (LYEKKLALYLLLALSLASVAM) traverse the membrane as a helical segment. Residues 2443–2445 (CRT) are Lumenal-facing. A helical membrane pass occupies residues 2446–2466 (PFSLAEGIVLASAALGPLIEG). The Cytoplasmic portion of the chain corresponds to 2467–3411 (NTSLLWNGPM…DADLQPGELI (945 aa)). The mRNA cap 0-1 NS5-type MT domain occupies 2507–2771 (GRANGKTLGE…DVILPIGTRS (265 aa)). Ser-2562 provides a ligand contact to S-adenosyl-L-methionine. Ser-2562 bears the Phosphoserine mark. Lys-2567 serves as the catalytic For 2'-O-MTase activity. The S-adenosyl-L-methionine site is built by Gly-2592, Trp-2593, Thr-2610, Leu-2611, Asp-2637, and Ile-2638. Asp-2652 acts as the For 2'-O-MTase activity in catalysis. Ile-2653 contributes to the S-adenosyl-L-methionine binding site. Catalysis depends on for 2'-O-MTase activity residues Lys-2688 and Glu-2724. Tyr-2726 provides a ligand contact to S-adenosyl-L-methionine. A Nuclear localization signal motif is present at residues 2878–2911 (RKIMKVVNRWLFRHLAREKNPRLCTKEEFIAKVR). Zn(2+)-binding residues include Glu-2945, His-2949, Cys-2954, and Cys-2957. The 153-residue stretch at 3035-3187 (GGFYADDTAG…RPIDDRFGLA (153 aa)) folds into the RdRp catalytic domain. Zn(2+) is bound by residues His-3222, Cys-3238, and Cys-3357.

This sequence in the N-terminal section; belongs to the class I-like SAM-binding methyltransferase superfamily. mRNA cap 0-1 NS5-type methyltransferase family. As to quaternary structure, homodimer. Interacts (via N-terminus) with host EXOC1 (via C-terminus); this interaction results in EXOC1 degradation through the proteasome degradation pathway. Forms heterodimers with envelope protein E in the endoplasmic reticulum and Golgi. In terms of assembly, homodimer; in the endoplasmic reticulum and Golgi. Interacts with protein prM. Interacts with non-structural protein 1. As to quaternary structure, homodimer; Homohexamer when secreted. Interacts with envelope protein E. Interacts (via N-terminus) with serine protease NS3. In terms of assembly, forms a heterodimer with serine protease NS3. May form homooligomers. As to quaternary structure, forms a heterodimer with NS2B. Interacts with non-structural protein 2A (via N-terminus). Interacts with NS4B. Interacts with unphosphorylated RNA-directed RNA polymerase NS5; this interaction stimulates RNA-directed RNA polymerase NS5 guanylyltransferase activity. NS3 interacts with host PDCD6IP; this interaction contributes to virion release. Interacts with serine protease NS3. In terms of assembly, homodimer. Interacts with host STAT2; this interaction prevents the establishment of cellular antiviral state. Interacts with serine protease NS3. Interacts with host TRIM23; this interaction leads to NS5 ubiquitination. Specific enzymatic cleavages in vivo yield mature proteins. The nascent capsid protein C contains a C-terminal hydrophobic domain that act as a signal sequence for translocation of prM into the lumen of the ER. Mature capsid protein C is cleaved at a site upstream of this hydrophobic domain by NS3. prM is cleaved in post-Golgi vesicles by a host furin, releasing the mature small envelope protein M, and peptide pr. Non-structural protein 2A-alpha, a C-terminally truncated form of non-structural protein 2A, results from partial cleavage by NS3. Specific enzymatic cleavages in vivo yield mature proteins peptide 2K acts as a signal sequence and is removed from the N-terminus of NS4B by the host signal peptidase in the ER lumen. Signal cleavage at the 2K-4B site requires a prior NS3 protease-mediated cleavage at the 4A-2K site. In terms of processing, cleaved in post-Golgi vesicles by a host furin, releasing the mature small envelope protein M, and peptide pr. This cleavage is incomplete as up to 30% of viral particles still carry uncleaved prM. Post-translationally, N-glycosylated. N-glycosylated. The excreted form is glycosylated and this is required for efficient secretion of the protein from infected cells. In terms of processing, polyubiquitinated; ubiquitination is probably mediated by host TRIM23 and is prerequisite for NS5-STAT2 interaction. NS5 is not ISGylated or sumoylated. Post-translationally, acetylated by host KAT5. Acetylation modulates NS3 RNA-binding and unwinding activities and plays an important positive role for viral replication. Phosphorylated on serines residues. This phosphorylation may trigger NS5 nuclear localization.

Its subcellular location is the virion. The protein resides in the host nucleus. It localises to the host cytoplasm. The protein localises to the host perinuclear region. It is found in the secreted. Its subcellular location is the virion membrane. The protein resides in the host endoplasmic reticulum membrane. It carries out the reaction Selective hydrolysis of -Xaa-Xaa-|-Yaa- bonds in which each of the Xaa can be either Arg or Lys and Yaa can be either Ser or Ala.. It catalyses the reaction RNA(n) + a ribonucleoside 5'-triphosphate = RNA(n+1) + diphosphate. The catalysed reaction is a ribonucleoside 5'-triphosphate + H2O = a ribonucleoside 5'-diphosphate + phosphate + H(+). The enzyme catalyses ATP + H2O = ADP + phosphate + H(+). It carries out the reaction a 5'-end (5'-triphosphoguanosine)-ribonucleoside in mRNA + S-adenosyl-L-methionine = a 5'-end (N(7)-methyl 5'-triphosphoguanosine)-ribonucleoside in mRNA + S-adenosyl-L-homocysteine. It catalyses the reaction a 5'-end (N(7)-methyl 5'-triphosphoguanosine)-ribonucleoside in mRNA + S-adenosyl-L-methionine = a 5'-end (N(7)-methyl 5'-triphosphoguanosine)-(2'-O-methyl-ribonucleoside) in mRNA + S-adenosyl-L-homocysteine + H(+). In terms of biological role, plays a role in virus budding by binding to the cell membrane and gathering the viral RNA into a nucleocapsid that forms the core of a mature virus particle. During virus entry, may induce genome penetration into the host cytoplasm after hemifusion induced by the surface proteins. Can migrate to the cell nucleus where it modulates host functions. Inhibits RNA silencing by interfering with host Dicer. Its function is as follows. Prevents premature fusion activity of envelope proteins in trans-Golgi by binding to envelope protein E at pH6.0. After virion release in extracellular space, gets dissociated from E dimers. Functionally, acts as a chaperone for envelope protein E during intracellular virion assembly by masking and inactivating envelope protein E fusion peptide. prM is the only viral peptide matured by host furin in the trans-Golgi network probably to avoid catastrophic activation of the viral fusion activity in acidic Golgi compartment prior to virion release. prM-E cleavage is inefficient, and many virions are only partially matured. These uncleaved prM would play a role in immune evasion. In terms of biological role, may play a role in virus budding. Exerts cytotoxic effects by activating a mitochondrial apoptotic pathway through M ectodomain. May display a viroporin activity. Binds to host cell surface receptor and mediates fusion between viral and cellular membranes. Envelope protein is synthesized in the endoplasmic reticulum in the form of heterodimer with protein prM. They play a role in virion budding in the ER, and the newly formed immature particle is covered with 60 spikes composed of heterodimer between precursor prM and envelope protein E. The virion is transported to the Golgi apparatus where the low pH causes dissociation of PrM-E heterodimers and formation of E homodimers. prM-E cleavage is inefficient, and many virions are only partially matured. These uncleaved prM would play a role in immune evasion. Its function is as follows. Involved in immune evasion, pathogenesis and viral replication. Once cleaved off the polyprotein, is targeted to three destinations: the viral replication cycle, the plasma membrane and the extracellular compartment. Essential for viral replication. Required for formation of the replication complex and recruitment of other non-structural proteins to the ER-derived membrane structures. Excreted as a hexameric lipoparticle that plays a role against host immune response. Antagonizing the complement function. Binds to the host macrophages and dendritic cells. Inhibits signal transduction originating from Toll-like receptor 3 (TLR3). Functionally, component of the viral RNA replication complex that functions in virion assembly and antagonizes the host immune response. In terms of biological role, required cofactor for the serine protease function of NS3. May have membrane-destabilizing activity and form viroporins. Displays three enzymatic activities: serine protease, NTPase and RNA helicase. NS3 serine protease, in association with NS2B, performs its autocleavage and cleaves the polyprotein at dibasic sites in the cytoplasm: C-prM, NS2A-NS2B, NS2B-NS3, NS3-NS4A, NS4A-2K and NS4B-NS5. NS3 RNA helicase binds RNA and unwinds dsRNA in the 3' to 5' direction. Also plays a role in virus assembly. Its function is as follows. Regulates the ATPase activity of the NS3 helicase activity. NS4A allows NS3 helicase to conserve energy during unwinding. Functionally, functions as a signal peptide for NS4B and is required for the interferon antagonism activity of the latter. In terms of biological role, induces the formation of ER-derived membrane vesicles where the viral replication takes place. Inhibits interferon (IFN)-induced host STAT1 phosphorylation and nuclear translocation, thereby preventing the establishment of cellular antiviral state by blocking the IFN-alpha/beta pathway. Replicates the viral (+) and (-) RNA genome, and performs the capping of genomes in the cytoplasm. NS5 methylates viral RNA cap at guanine N-7 and ribose 2'-O positions. Besides its role in RNA genome replication, also prevents the establishment of cellular antiviral state by blocking the interferon-alpha/beta (IFN-alpha/beta) signaling pathway. IFN-I induces binding of NS5 to host IFN-activated transcription factor STAT2, preventing its transcriptional activity. Host TRIM23 is the E3 ligase that interacts with and polyubiquitinates NS5 to promote its binding to STAT2 and trigger IFN-I signaling inhibition. The chain is Genome polyprotein from Yellow fever virus (isolate Ivory Coast/1999) (YFV).